The sequence spans 222 residues: GTP-binding nuclear protein Ran-4 (222 aa).

Residues 10–174 enclose the Small GTPase Ran-type domain; sequence DLPTFKLLIV…LYLARRIAGD (165 aa). Residue 21–28 participates in GTP binding; that stretch reads DGGTGKTT. Residues 40–48 form a switch-I region; sequence HNTEPTLGV. Residues Gly71, 125–128, and 153–155 each bind GTP; these read NKVD and SAK. The tract at residues 71 to 87 is switch-II; that stretch reads GQEKYSGLKDAYYIHGQ.

This sequence belongs to the small GTPase superfamily. Ran family. As to quaternary structure, found in a nuclear export complex with RanGTP, exportin and pre-miRNA.

The protein localises to the nucleus. In terms of biological role, GTP-binding protein involved in nucleocytoplasmic transport. Required for the import of protein into the nucleus and also for RNA export. Involved in chromatin condensation and control of cell cycle. The chain is GTP-binding nuclear protein Ran-4 (RAN4) from Arabidopsis thaliana (Mouse-ear cress).